The following is a 307-amino-acid chain: Protoheme IX farnesyltransferase (307 aa).

9 helical membrane-spanning segments follow: residues 28 to 48 (LVIF…NPIL), 50 to 70 (FTAI…NQWW), 99 to 117 (FGIL…AINW), 121 to 138 (IILA…TIWL), 146 to 166 (IVIG…AVTG), 173 to 193 (VLLF…LALF), 219 to 239 (ILVY…IGAT), 241 to 261 (AIYG…SVPV), and 278 to 298 (LFGF…ADRY).

The protein belongs to the UbiA prenyltransferase family. Protoheme IX farnesyltransferase subfamily.

It localises to the cell inner membrane. It carries out the reaction heme b + (2E,6E)-farnesyl diphosphate + H2O = Fe(II)-heme o + diphosphate. It participates in porphyrin-containing compound metabolism; heme O biosynthesis; heme O from protoheme: step 1/1. Converts heme B (protoheme IX) to heme O by substitution of the vinyl group on carbon 2 of heme B porphyrin ring with a hydroxyethyl farnesyl side group. This Erythrobacter litoralis (strain HTCC2594) protein is Protoheme IX farnesyltransferase.